A 143-amino-acid polypeptide reads, in one-letter code: Large ribosomal subunit protein uL11 (143 aa).

It belongs to the universal ribosomal protein uL11 family. As to quaternary structure, part of the ribosomal stalk of the 50S ribosomal subunit. Interacts with L10 and the large rRNA to form the base of the stalk. L10 forms an elongated spine to which L12 dimers bind in a sequential fashion forming a multimeric L10(L12)X complex. One or more lysine residues are methylated.

Its function is as follows. Forms part of the ribosomal stalk which helps the ribosome interact with GTP-bound translation factors. The protein is Large ribosomal subunit protein uL11 of Bifidobacterium longum subsp. infantis (strain ATCC 15697 / DSM 20088 / JCM 1222 / NCTC 11817 / S12).